Here is a 35-residue protein sequence, read N- to C-terminus: Beta/omega-theraphotoxin-Bp1a (35 aa).

Disulfide bonds link C2-C16, C9-C21, and C15-C28.

The protein belongs to the neurotoxin 10 (Hwtx-1) family. 54 (ProTx-1) subfamily. An unnatural amidation at Ser-35 provokes a 14-fold increased toxin ability to inhibit Nav1.2/SCN2A and a ~2-fold decreased toxin ability to inhibit both Nav1.5/SCN5A and Nav1.7/SCN9A. In terms of tissue distribution, expressed by the venom gland.

It localises to the secreted. In terms of biological role, ion channel impairing toxin that inhibits voltage-gated calcium channel Cav3.1/CACNA1G (IC(50)=53 nM), voltage-gated potassium channels Kv2.1/KCNB1 (IC(50)=411 nM), all sodium channels tested (Nav1.2/SCN2A (IC(50)=60-104 nM), Nav1.5/SCN5A (IC(50)=76-358 nM), Nav1.6/SCN8A (IC(50)=21-133 nM), Nav1.7/SCN9A (IC(50)=51-95 nM), and Nav1.8/SCN10A) as well as the nociceptor cation channel TRPA1 (IC(50)=389 nM). Acts as a potent and selective blocker of voltage-gated calcium channel Cav3.1/CACNA1G, but not of Cav3.2/CACNA1H, and Cav3.3/CACNA1I. On Nav1.7/SCN9A, primarily interacts with the DII and DIV voltage-sensor domains. Also acts as an inhibitor of nociceptor cation channel TRPA1 (IC(50)~389 nM) by binding to the S1-S4 gating domain of TRPA1. It shows moderate affinity for lipid bilayers. In Bumba pulcherrimaklaasi (Tarantula spider), this protein is Beta/omega-theraphotoxin-Bp1a.